Here is a 59-residue protein sequence, read N- to C-terminus: Embryonic testis differentiation protein (59 aa).

The segment at 1–28 (MDEKNPEAVPRPPEQNTELVPPKKSKSK) is disordered.

In terms of tissue distribution, specifically expressed in testis.

In Mus musculus (Mouse), this protein is Embryonic testis differentiation protein.